Here is a 458-residue protein sequence, read N- to C-terminus: Acyl-CoA-binding domain-containing protein 5 (458 aa).

An ACB domain is found at 8 to 97; it reads HQTRFEAAVS…MKKILETMPV (90 aa). Residues 19 to 28, 39 to 43, Lys-65, and Tyr-84 each bind an acyl-CoA; these read IQSLPKNGSF and YSFYK. Disordered regions lie at residues 119 to 248 and 296 to 369; these read KHGR…REED and TETS…GPNG. The segment covering 125–139 has biased composition (polar residues); it reads GVTSELGSVLTSTPN. Residues 154–188 are a coiled coil; it reads AESDEEQAATKEVREEDEEEESEHSEQEDKDVEQQ. Composition is skewed to basic and acidic residues over residues 177–195, 303–313, and 322–338; these read HSEQEDKDVEQQPGHEKPA, ELKDGGEDGKQ, and TWSEKSEHFGSRRERPS. Gly residues predominate over residues 343 to 356; the sequence is GGDGSRSGQIGSGG. Positions 373-402 form a coiled coil; that stretch reads EQIAVVLMRLQEDMQNVLQRLHSLEVQTAS. A helical transmembrane segment spans residues 430–450; that stretch reads GTLALAVVWPFVVHWLMHVFL.

The protein belongs to the ATG37 family.

It localises to the peroxisome membrane. In terms of biological role, acyl-CoA binding protein which acts as the peroxisome receptor for pexophagy but is dispensable for aggrephagy and nonselective autophagy. Binds medium- and long-chain acyl-CoA esters. The polypeptide is Acyl-CoA-binding domain-containing protein 5 (acbd5) (Xenopus tropicalis (Western clawed frog)).